The chain runs to 489 residues: Poly(A) RNA polymerase GLD2 (489 aa).

The interval 93–118 (RQRFSCPSPHNQSARNSNFTSQPVTR) is disordered. The segment covering 100 to 116 (SPHNQSARNSNFTSQPV) has biased composition (polar residues). Asp219 and Asp221 together coordinate Mg(2+). The 55-residue stretch at 386-440 (SLGDLFLGFLRYYATVFKWDKQVISVRMARTLPKSNCKEWKDKFICVEEPFNRTN) folds into the PAP-associated domain.

It belongs to the DNA polymerase type-B-like family. GLD2 subfamily. Mg(2+) is required as a cofactor. Mn(2+) serves as cofactor.

It localises to the cytoplasm. It carries out the reaction RNA(n) + ATP = RNA(n)-3'-adenine ribonucleotide + diphosphate. Its function is as follows. Cytoplasmic poly(A) RNA polymerase that adds successive AMP monomers to the 3'-end of specific RNAs, forming a poly(A) tail. In contrast to the canonical nuclear poly(A) RNA polymerase, it only adds poly(A) to selected cytoplasmic mRNAs. May not play a role in replication-dependent histone mRNA degradation. The protein is Poly(A) RNA polymerase GLD2 of Danio rerio (Zebrafish).